We begin with the raw amino-acid sequence, 254 residues long: Alcohol dehydrogenase (254 aa).

10 to 33 (FVAGLGGIGLDTSREIVKSGPKNL) provides a ligand contact to NAD(+). S138 lines the substrate pocket. Residue Y151 is the Proton acceptor of the active site.

The protein belongs to the short-chain dehydrogenases/reductases (SDR) family. Homodimer.

The catalysed reaction is a primary alcohol + NAD(+) = an aldehyde + NADH + H(+). The enzyme catalyses a secondary alcohol + NAD(+) = a ketone + NADH + H(+). The protein is Alcohol dehydrogenase (Adh) of Drosophila affinidisjuncta (Fruit fly).